Here is a 318-residue protein sequence, read N- to C-terminus: Protein-L-histidine N-pros-methyltransferase (318 aa).

Residues methionine 1–alanine 18 form the signal peptide. N-linked (GlcNAc...) asparagine glycosylation is present at asparagine 35. S-adenosyl-L-homocysteine contacts are provided by glutamate 174, asparagine 210, and tyrosine 295.

This sequence belongs to the METTL9 family. Expressed in liver, colon, small intestine, skin, kidney and to a lesser extent in spleen, lung, thymus and stomach. Not detected in fibroblast and endothelial cells.

Its subcellular location is the endoplasmic reticulum. The protein resides in the mitochondrion. The catalysed reaction is L-histidyl-[protein] + S-adenosyl-L-methionine = N(pros)-methyl-L-histidyl-[protein] + S-adenosyl-L-homocysteine + H(+). Its function is as follows. Protein-histidine N-methyltransferase that specifically catalyzes 1-methylhistidine (pros-methylhistidine) methylation of target proteins. Specifically methylates the second His of proteins with a His-x-His (HxH) motif (where 'x' is preferably a small amino acid), while exploiting the first one as a recognition signature. Catalyzes methylation of target proteins such as S100A9, NDUFB3, SLC39A5, SLC39A7, ARMC6 and DNAJB12; 1-methylhistidine modification may affect the binding of zinc and other metals to its target proteins. Constitutes the main methyltransferase for the 1-methylhistidine modification in cell. The sequence is that of Protein-L-histidine N-pros-methyltransferase from Mus musculus (Mouse).